A 336-amino-acid polypeptide reads, in one-letter code: NADH-quinone oxidoreductase subunit H (336 aa).

8 helical membrane-spanning segments follow: residues 14-34 (IIVA…AFLV), 82-102 (IIFL…WAVI), 115-135 (VGIL…IMAG), 161-181 (IGLV…SDVV), 186-206 (TVWF…SALA), 247-267 (ILMS…PLDV), 273-293 (VPGP…FVWV), and 312-332 (VFLP…VTFD).

The protein belongs to the complex I subunit 1 family. NDH-1 is composed of 14 different subunits. Subunits NuoA, H, J, K, L, M, N constitute the membrane sector of the complex.

The protein localises to the cell inner membrane. The enzyme catalyses a quinone + NADH + 5 H(+)(in) = a quinol + NAD(+) + 4 H(+)(out). Functionally, NDH-1 shuttles electrons from NADH, via FMN and iron-sulfur (Fe-S) centers, to quinones in the respiratory chain. The immediate electron acceptor for the enzyme in this species is believed to be ubiquinone. Couples the redox reaction to proton translocation (for every two electrons transferred, four hydrogen ions are translocated across the cytoplasmic membrane), and thus conserves the redox energy in a proton gradient. This subunit may bind ubiquinone. This Rhodospirillum centenum (strain ATCC 51521 / SW) protein is NADH-quinone oxidoreductase subunit H.